Here is a 287-residue protein sequence, read N- to C-terminus: MKIFVPATSANMGPGFDCLGTAVSMFLELDVLETSDKWFVEHDMSGISHDESNLIVKTALELAPKLTPHRLSVKSQIPLSRGLGSSSTAIVAGIELANQLANLNLSQQDKCKIAAKIEGHPDNVMPAILGGMVVASKIEDQYYFQELPLIPFDFLAYIPNYELDTKASRNALPEKLPFKNATHASSILGTLTASLALQDYGTAKRLIEADEFHEPYRQKLVPELVKIRKIAHQHEAFATYLSGAGSTVMTTIEHSRTEEFIASLRKAGLDDRIEQLKASSQGVFIEK.

Position 78-88 (78-88 (PLSRGLGSSST)) interacts with ATP.

The protein belongs to the GHMP kinase family. Homoserine kinase subfamily.

The protein resides in the cytoplasm. The enzyme catalyses L-homoserine + ATP = O-phospho-L-homoserine + ADP + H(+). The protein operates within amino-acid biosynthesis; L-threonine biosynthesis; L-threonine from L-aspartate: step 4/5. Catalyzes the ATP-dependent phosphorylation of L-homoserine to L-homoserine phosphate. This is Homoserine kinase from Lactobacillus gasseri (strain ATCC 33323 / DSM 20243 / BCRC 14619 / CIP 102991 / JCM 1131 / KCTC 3163 / NCIMB 11718 / NCTC 13722 / AM63).